Consider the following 92-residue polypeptide: Long neurotoxin 3FTx-Oxy2 (92 aa).

The first 21 residues, 1-21, serve as a signal peptide directing secretion; it reads MKTLLLTLVVVTIVCLDLGYT. 4 cysteine pairs are disulfide-bonded: C24/C42, C35/C63, C67/C79, and C80/C85.

It belongs to the three-finger toxin family. Long-chain subfamily. Type II alpha-neurotoxin sub-subfamily. As to expression, expressed by the venom gland.

It localises to the secreted. Binds with high affinity to muscular (alpha-1/CHRNA1) and neuronal (alpha-7/CHRNA7) nicotinic acetylcholine receptor (nAChR) and inhibits acetylcholine from binding to the receptor, thereby impairing neuromuscular and neuronal transmission. The polypeptide is Long neurotoxin 3FTx-Oxy2 (Oxyuranus microlepidotus (Inland taipan)).